The following is a 940-amino-acid chain: Isoleucine--tRNA ligase (940 aa).

The 'HIGH' region signature appears at 58–68 (PYANGNIHIGH). Residue Glu-563 coordinates L-isoleucyl-5'-AMP. A 'KMSKS' region motif is present at residues 604–608 (KMSKS). Lys-607 serves as a coordination point for ATP. Zn(2+) is bound by residues Cys-903, Cys-906, Cys-923, and Cys-926.

Belongs to the class-I aminoacyl-tRNA synthetase family. IleS type 1 subfamily. In terms of assembly, monomer. It depends on Zn(2+) as a cofactor.

The protein resides in the cytoplasm. It carries out the reaction tRNA(Ile) + L-isoleucine + ATP = L-isoleucyl-tRNA(Ile) + AMP + diphosphate. In terms of biological role, catalyzes the attachment of isoleucine to tRNA(Ile). As IleRS can inadvertently accommodate and process structurally similar amino acids such as valine, to avoid such errors it has two additional distinct tRNA(Ile)-dependent editing activities. One activity is designated as 'pretransfer' editing and involves the hydrolysis of activated Val-AMP. The other activity is designated 'posttransfer' editing and involves deacylation of mischarged Val-tRNA(Ile). The sequence is that of Isoleucine--tRNA ligase from Buchnera aphidicola subsp. Acyrthosiphon pisum (strain APS) (Acyrthosiphon pisum symbiotic bacterium).